The primary structure comprises 78 residues: Exodeoxyribonuclease 7 small subunit (78 aa).

This sequence belongs to the XseB family. Heterooligomer composed of large and small subunits.

The protein localises to the cytoplasm. The catalysed reaction is Exonucleolytic cleavage in either 5'- to 3'- or 3'- to 5'-direction to yield nucleoside 5'-phosphates.. In terms of biological role, bidirectionally degrades single-stranded DNA into large acid-insoluble oligonucleotides, which are then degraded further into small acid-soluble oligonucleotides. In Idiomarina loihiensis (strain ATCC BAA-735 / DSM 15497 / L2-TR), this protein is Exodeoxyribonuclease 7 small subunit.